A 522-amino-acid chain; its full sequence is MSFSRSAADAADTLPDLAATLGAPALGAFVTLGDAFHTRLPAAPLPAPYVVGFSDEVAQLLGLPASFAAQPGFAELFAGNPTRDWPAHALPYASVYSGHQFGVWAGQLGDGRALTIGELPGTDGRRYELQIKGGGRTPYSRMGDGRAVLRSSIREFLCSEAMHHLGIPTTRALTVIGSDQPVVREEIETSAVVTRVSESFVRFGHFEHFFSNDRPDLLRQLADHVIDRFYPACRDADDPYLALLEAAMLRTADLVAQWQAVGFCHGVMNTDNMSILGLTIDYGPFGFVDAFDANHICNHSDTSGRYAYRMQPRIAHWNCYCLAQALLPLIGLQHGIADDDARAERAVDDAQAVLAKFPERFGPALERAMRAKLGLELERENDAELANKLLETMHASHADFTLTFRRLAQLSKHDASRDAPVRDLFIDRDAFDAWANLYRARLSEETRDDAARAAAMNRVNPKYVLRNHLAEVAIRRAKEKDFSEVERLAQVLRRPFDEQPEHEAYAALPPDWAGSLEVSCSS.

The ATP site is built by G109, G111, R112, K132, D144, G145, R195, and R202. D271 acts as the Proton acceptor in catalysis. Mg(2+)-binding residues include N272 and D281. Residue D281 participates in ATP binding.

Belongs to the SELO family. Requires Mg(2+) as cofactor. Mn(2+) is required as a cofactor.

The enzyme catalyses L-seryl-[protein] + ATP = 3-O-(5'-adenylyl)-L-seryl-[protein] + diphosphate. It carries out the reaction L-threonyl-[protein] + ATP = 3-O-(5'-adenylyl)-L-threonyl-[protein] + diphosphate. It catalyses the reaction L-tyrosyl-[protein] + ATP = O-(5'-adenylyl)-L-tyrosyl-[protein] + diphosphate. The catalysed reaction is L-histidyl-[protein] + UTP = N(tele)-(5'-uridylyl)-L-histidyl-[protein] + diphosphate. The enzyme catalyses L-seryl-[protein] + UTP = O-(5'-uridylyl)-L-seryl-[protein] + diphosphate. It carries out the reaction L-tyrosyl-[protein] + UTP = O-(5'-uridylyl)-L-tyrosyl-[protein] + diphosphate. Functionally, nucleotidyltransferase involved in the post-translational modification of proteins. It can catalyze the addition of adenosine monophosphate (AMP) or uridine monophosphate (UMP) to a protein, resulting in modifications known as AMPylation and UMPylation. The sequence is that of Protein nucleotidyltransferase YdiU from Burkholderia ambifaria (strain MC40-6).